Here is a 152-residue protein sequence, read N- to C-terminus: 3-dehydroquinate dehydratase (152 aa).

The Proton acceptor role is filled by Tyr-26. Residues Asn-78, His-84, and Asp-91 each contribute to the substrate site. The Proton donor role is filled by His-104. Residues Ile-105–Ser-106 and Arg-115 contribute to the substrate site.

This sequence belongs to the type-II 3-dehydroquinase family. Homododecamer.

It catalyses the reaction 3-dehydroquinate = 3-dehydroshikimate + H2O. It participates in metabolic intermediate biosynthesis; chorismate biosynthesis; chorismate from D-erythrose 4-phosphate and phosphoenolpyruvate: step 3/7. Catalyzes a trans-dehydration via an enolate intermediate. The polypeptide is 3-dehydroquinate dehydratase (Buchnera aphidicola subsp. Cinara cedri (strain Cc)).